The sequence spans 316 residues: Ecto-ADP-ribosyltransferase 5 (316 aa).

Residues 1–23 form the signal peptide; the sequence is MIQATLLISLSCLSFYTLGSGVR. A disulfide bridge links cysteine 50 with cysteine 266. Asparagine 68 carries N-linked (GlcNAc...) asparagine glycosylation. Residues 70–261 form the TR mART core domain; sequence TRLRESWETA…MTLSSSDQMC (192 aa). Tyrosine 107 provides a ligand contact to NAD(+). Residue asparagine 109 is glycosylated (N-linked (GlcNAc...) asparagine). Positions 168 and 188 each coordinate NAD(+). Arginine 168 is an active-site residue. The active site involves serine 191. NAD(+) is bound at residue serine 222. Glutamate 229 is a catalytic residue. N-linked (GlcNAc...) asparagine glycans are attached at residues asparagine 242 and asparagine 248.

It belongs to the Arg-specific ADP-ribosyltransferase family.

It is found in the secreted. The protein localises to the membrane. The catalysed reaction is L-arginyl-[protein] + NAD(+) = N(omega)-(ADP-D-ribosyl)-L-arginyl-[protein] + nicotinamide + H(+). In Bos taurus (Bovine), this protein is Ecto-ADP-ribosyltransferase 5 (ART5).